The primary structure comprises 437 residues: Transcription factor E2F2 (437 aa).

Positions 65–105 (ATPHGPEGQVVRCLPAGRLPAKRKLDLEGIGRPVVPEFPTP) are cyclin A/CDK2 binding. Residues 107 to 196 (GKCIRVDGLP…KNNIQWVGRG (90 aa)) mediate DNA binding. Positions 155 to 176 (LNWAAEVLDVQKRRIYDITNVL) are leucine-zipper. The DEF box motif lies at 160–196 (EVLDVQKRRIYDITNVLEGIQLIRKKAKNNIQWVGRG). The tract at residues 197–289 (MFEDPTRPGK…PDRTEDNLQI (93 aa)) is dimerization. The tract at residues 307-368 (VQEPDSPSEE…APPPPSLVPL (62 aa)) is disordered. The span at 315 to 330 (EEPLPSTSTLCPSPDS) shows a compositional bias: low complexity. The segment covering 351-365 (APAPTPQQAPPPPSL) has biased composition (pro residues). The segment at 359–437 (APPPPSLVPL…SYDLGDLLIN (79 aa)) is transactivation. Positions 410–427 (DDYLWGLEAGEGISDLFD) are retinoblastoma protein binding.

The protein belongs to the E2F/DP family. In terms of assembly, component of the DRTF1/E2F transcription factor complex. Forms heterodimers with DP family members. The E2F2 complex binds specifically hypophosphorylated retinoblastoma protein RB1. During the cell cycle, RB1 becomes phosphorylated in mid-to-late G1 phase, detaches from the DRTF1/E2F complex, rendering E2F transcriptionally active. Viral oncoproteins, notably E1A, T-antigen and HPV E7, are capable of sequestering RB1, thus releasing the active complex. Binds EAPP. Phosphorylated by CDK2 and cyclin A-CDK2 in the S-phase. In terms of tissue distribution, highest level of expression is found in placenta, low levels are found in lung. Found as well in many immortalized cell lines derived from tumor samples.

It localises to the nucleus. Transcription activator that binds DNA cooperatively with DP proteins through the E2 recognition site, 5'-TTTC[CG]CGC-3' found in the promoter region of a number of genes whose products are involved in cell cycle regulation or in DNA replication. The DRTF1/E2F complex functions in the control of cell-cycle progression from g1 to s phase. E2F2 binds specifically to RB1 in a cell-cycle dependent manner. In Homo sapiens (Human), this protein is Transcription factor E2F2 (E2F2).